Here is a 242-residue protein sequence, read N- to C-terminus: Probable transcriptional regulatory protein NMA1902 (242 aa).

The protein belongs to the TACO1 family.

Its subcellular location is the cytoplasm. In Neisseria meningitidis serogroup A / serotype 4A (strain DSM 15465 / Z2491), this protein is Probable transcriptional regulatory protein NMA1902.